The sequence spans 355 residues: MSNVIIDLKNIDITFTQKRRTIQAVKDVSIQIEKGDIYGIVGYSGAGKSTLVRAINLLQVPTAGKITIGEDVTFEDGKVQLTTKELRQKRQTIGMIFQHFNLMAQKTAYENVAFALRHSKLSNEEKDKKIRGLLELVDLADRAENYPAQLSGGQKQRVAIARALANDPEILISDESTSALDPKTTKQILSLLQDLNKKLGLTVVMITHEMQIVKDICNRVAVMQNGQLLEEGSVLDIFSNPQEDLTQEFIETAAGIEDALAKINAQPLVKNLPASALLVQLKYVGSSTDRPLLTEIFKDFGVSGNILYGNVEILGDTPVGELVVVLDGDSDKVIAALKAIENAGVSLRVLKKGAQ.

The ABC transporter domain maps to 8-250 (LKNIDITFTQ…PQEDLTQEFI (243 aa)). 42-49 (GYSGAGKS) is an ATP binding site.

Belongs to the ABC transporter superfamily. Methionine importer (TC 3.A.1.24) family. The complex is composed of two ATP-binding proteins (MetN), two transmembrane proteins (MetI) and a solute-binding protein (MetQ).

The protein localises to the cell membrane. The enzyme catalyses L-methionine(out) + ATP + H2O = L-methionine(in) + ADP + phosphate + H(+). It carries out the reaction D-methionine(out) + ATP + H2O = D-methionine(in) + ADP + phosphate + H(+). In terms of biological role, part of the ABC transporter complex MetNIQ involved in methionine import. Responsible for energy coupling to the transport system. This Streptococcus thermophilus (strain ATCC BAA-250 / LMG 18311) protein is Methionine import ATP-binding protein MetN.